A 370-amino-acid chain; its full sequence is 3-dehydroquinate synthase (370 aa).

NAD(+)-binding positions include 112-116 (GVVGD), 136-137 (TS), Lys149, Lys158, and 176-179 (TLRT). Zn(2+) is bound by residues Glu191, His254, and His276.

The protein belongs to the sugar phosphate cyclases superfamily. Dehydroquinate synthase family. Co(2+) is required as a cofactor. Requires Zn(2+) as cofactor. NAD(+) serves as cofactor.

The protein resides in the cytoplasm. It carries out the reaction 7-phospho-2-dehydro-3-deoxy-D-arabino-heptonate = 3-dehydroquinate + phosphate. The protein operates within metabolic intermediate biosynthesis; chorismate biosynthesis; chorismate from D-erythrose 4-phosphate and phosphoenolpyruvate: step 2/7. Catalyzes the conversion of 3-deoxy-D-arabino-heptulosonate 7-phosphate (DAHP) to dehydroquinate (DHQ). The protein is 3-dehydroquinate synthase of Xanthomonas oryzae pv. oryzae (strain PXO99A).